A 65-amino-acid polypeptide reads, in one-letter code: MNKVCFVVVLVLFVALAAYVSPIEGVPTGGCPLSDSLCAKYCKSHKFGKTGRCTGPNKMKCKCLV.

Positions 1-25 (MNKVCFVVVLVLFVALAAYVSPIEG) are cleaved as a signal peptide. 3 disulfides stabilise this stretch: Cys31/Cys53, Cys38/Cys61, and Cys42/Cys63.

It belongs to the short scorpion toxin superfamily. Potassium channel inhibitor family. Alpha-KTx 11 subfamily. In terms of tissue distribution, expressed by the venom gland.

The protein localises to the secreted. Functionally, this recombinant toxin inhibits the mammalian voltage-gated potassium channels Kv1.3/KCNA3 in vitro with an IC(50) of 26.40 nM. The chain is Toxin KTx8 from Lychas mucronatus (Chinese swimming scorpion).